A 440-amino-acid chain; its full sequence is Heat stress transcription factor A-4b (440 aa).

Positions 121 to 181 (NERKDYEEEI…QRSLISYVRE (61 aa)) form a coiled coil. The interval 133–183 (LKSDNAALSSELQNNTLKKLNMEKRMQALEEKLFVVEDQQRSLISYVREIV) is hydrophobic repeat HR-A/B. The Nuclear export signal signature appears at 158–163 (MQALEE). Residues 200-204 (RKKRR) carry the Nuclear localization signal motif. A disordered region spans residues 264–417 (DISYDDGVPG…EMKSGDRQHL (154 aa)). Positions 295–305 (SPPTRMRTSSA) are enriched in polar residues. Over residues 333-343 (SRVDTRAKVSE) the composition is skewed to basic and acidic residues. Residues 375–384 (DGFWQQFLTE) carry the AHA motif. Residues 380 to 390 (QFLTEQPGSSD) are compositionally biased toward polar residues. Residues 391–417 (AHQEAQSERRDGGNKVDEMKSGDRQHL) show a composition bias toward basic and acidic residues.

The protein belongs to the HSF family. Class A subfamily. Homotrimer. Post-translationally, exhibits temperature-dependent phosphorylation.

It localises to the cytoplasm. Its subcellular location is the nucleus. Its function is as follows. Transcriptional regulator that specifically binds DNA of heat shock promoter elements (HSE). This chain is Heat stress transcription factor A-4b (HSFA4B), found in Oryza sativa subsp. japonica (Rice).